The chain runs to 355 residues: Probable butyrate kinase (355 aa).

The protein belongs to the acetokinase family.

The protein localises to the cytoplasm. It catalyses the reaction butanoate + ATP = butanoyl phosphate + ADP. The chain is Probable butyrate kinase from Listeria welshimeri serovar 6b (strain ATCC 35897 / DSM 20650 / CCUG 15529 / CIP 8149 / NCTC 11857 / SLCC 5334 / V8).